Reading from the N-terminus, the 23-residue chain is Hemocyanin subunit 1 (23 aa).

The segment at 1–23 (DSPGGASDTQKQHXVNSXXXKXY) is disordered.

This sequence belongs to the tyrosinase family. Hemocyanin subfamily. As to expression, hemolymph.

It localises to the secreted. It is found in the extracellular space. In terms of biological role, hemocyanins are copper-containing oxygen carriers occurring freely dissolved in the hemolymph of many mollusks and arthropods. The polypeptide is Hemocyanin subunit 1 (Cancer pagurus (Rock crab)).